A 499-amino-acid polypeptide reads, in one-letter code: ADP,ATP carrier protein 5 (499 aa).

Transmembrane regions (helical) follow at residues 25-45 (LGKF…QNIL), 61-81 (IAGF…VIIY), 93-113 (IFYY…FVIY), 148-168 (YIVY…LLFW), 183-203 (FYTF…FLMM), 223-243 (ITLV…CCVL), 286-306 (LWLL…VEAV), 327-347 (LYIL…NNVM), 356-376 (AVIS…LIVF), 380-400 (ILSL…VSIG), and 468-488 (SISP…IYAV).

This sequence belongs to the ADP/ATP translocase tlc family.

It is found in the cell membrane. Functionally, provides the rickettsial cell with host ATP in exchange for rickettsial ADP. This is an obligate exchange system. This energy acquiring activity is an important component of rickettsial parasitism. This chain is ADP,ATP carrier protein 5 (tlcE), found in Rickettsia felis (strain ATCC VR-1525 / URRWXCal2) (Rickettsia azadi).